A 1712-amino-acid polypeptide reads, in one-letter code: U3 small nucleolar RNA-associated protein 10 (1712 aa).

HEAT repeat units lie at residues 164-202 (EELVLRILPVLNSCMQAKYGAETVAACYSIVTVLAGRGE), 490-528 (TCDFQNLIPYLLHALADPSAPVRRAAAACTVALSEASGS), 564-605 (TLLS…PKHG), 987-1025 (TQTISRVVPQLAASLRAKHKNFLTGVSDLLLSFTAAFEH), 1236-1275 (VISLISFLPSVEKVLQQSQHTDAKIISVGCIDRIVERFGK), 1605-1646 (EEVT…DSAA), and 1667-1705 (LGLLPEMLPFISELREDDDEMVERETQRWISQVEGVLGE).

The protein belongs to the HEATR1/UTP10 family. In terms of assembly, component of the ribosomal small subunit (SSU) processome.

The protein resides in the nucleus. Its subcellular location is the nucleolus. In terms of biological role, involved in nucleolar processing of pre-18S ribosomal RNA. Involved in ribosome biosynthesis. This Phaeosphaeria nodorum (strain SN15 / ATCC MYA-4574 / FGSC 10173) (Glume blotch fungus) protein is U3 small nucleolar RNA-associated protein 10.